A 679-amino-acid polypeptide reads, in one-letter code: Methionine--tRNA ligase (679 aa).

The short motif at 14–24 (PYANGSIHLGH) is the 'HIGH' region element. Zn(2+)-binding residues include Cys-145, Cys-148, Cys-158, and Cys-161. The 'KMSKS' region motif lies at 331–335 (KMSKS). Lys-334 serves as a coordination point for ATP. In terms of domain architecture, tRNA-binding spans 577–679 (TFAAVDLRVA…SGAKPGQRIK (103 aa)).

This sequence belongs to the class-I aminoacyl-tRNA synthetase family. MetG type 1 subfamily. As to quaternary structure, homodimer. Zn(2+) serves as cofactor.

It is found in the cytoplasm. It catalyses the reaction tRNA(Met) + L-methionine + ATP = L-methionyl-tRNA(Met) + AMP + diphosphate. In terms of biological role, is required not only for elongation of protein synthesis but also for the initiation of all mRNA translation through initiator tRNA(fMet) aminoacylation. This chain is Methionine--tRNA ligase, found in Pseudomonas putida (strain GB-1).